The primary structure comprises 276 residues: Non-homologous end joining protein Ku (276 aa).

In terms of domain architecture, Ku spans 11-177 (ISFGLVHIPI…PEEIRSMEPL (167 aa)). The tract at residues 256–276 (QVKTQQKKEAAPKKERRRKTS) is disordered.

It belongs to the prokaryotic Ku family. As to quaternary structure, homodimer. Interacts with LigD.

In terms of biological role, with LigD forms a non-homologous end joining (NHEJ) DNA repair enzyme, which repairs dsDNA breaks with reduced fidelity. Binds linear dsDNA with 5'- and 3'- overhangs but not closed circular dsDNA nor ssDNA. Recruits and stimulates the ligase activity of LigD. This is Non-homologous end joining protein Ku from Heliobacterium modesticaldum (strain ATCC 51547 / Ice1).